Here is a 329-residue protein sequence, read N- to C-terminus: Ketol-acid reductoisomerase (NADP(+)) (329 aa).

In terms of domain architecture, KARI N-terminal Rossmann spans 2-182 (TQLFYDTDAD…GGTRAGILET (181 aa)). NADP(+)-binding positions include 25–28 (YGSQ), Ser51, Ser53, and 83–86 (DEFQ). His108 is a catalytic residue. Gly134 contacts NADP(+). Residues 183–328 (NFKEETETDL…KGLRAMFSWL (146 aa)) form the KARI C-terminal knotted domain. The Mg(2+) site is built by Asp191, Glu195, Glu227, and Glu231. Substrate is bound at residue Ser252.

The protein belongs to the ketol-acid reductoisomerase family. Mg(2+) serves as cofactor.

It carries out the reaction (2R)-2,3-dihydroxy-3-methylbutanoate + NADP(+) = (2S)-2-acetolactate + NADPH + H(+). The catalysed reaction is (2R,3R)-2,3-dihydroxy-3-methylpentanoate + NADP(+) = (S)-2-ethyl-2-hydroxy-3-oxobutanoate + NADPH + H(+). Its pathway is amino-acid biosynthesis; L-isoleucine biosynthesis; L-isoleucine from 2-oxobutanoate: step 2/4. It participates in amino-acid biosynthesis; L-valine biosynthesis; L-valine from pyruvate: step 2/4. Involved in the biosynthesis of branched-chain amino acids (BCAA). Catalyzes an alkyl-migration followed by a ketol-acid reduction of (S)-2-acetolactate (S2AL) to yield (R)-2,3-dihydroxy-isovalerate. In the isomerase reaction, S2AL is rearranged via a Mg-dependent methyl migration to produce 3-hydroxy-3-methyl-2-ketobutyrate (HMKB). In the reductase reaction, this 2-ketoacid undergoes a metal-dependent reduction by NADPH to yield (R)-2,3-dihydroxy-isovalerate. The sequence is that of Ketol-acid reductoisomerase (NADP(+)) from Prochlorococcus marinus (strain MIT 9515).